The following is a 503-amino-acid chain: Ferulic acid decarboxylase 1 (503 aa).

Mn(2+) contacts are provided by Asn170, His193, and Glu236. Prenylated FMN is bound by residues 170–175 (NWSIAR), 192–193 (QH), and Glu236. Glu285 functions as the Proton donor in the catalytic mechanism. Lys394 lines the prenylated FMN pocket.

This sequence belongs to the UbiD family. UbiD-like/FDC subfamily. Homodimer. May form higher order oligomers. It depends on Mn(2+) as a cofactor. Prenylated FMN serves as cofactor.

The protein localises to the cytoplasm. The enzyme catalyses (E)-4-coumarate + H(+) = 4-vinylphenol + CO2. It catalyses the reaction (E)-cinnamate + H(+) = styrene + CO2. It carries out the reaction (E)-ferulate + H(+) = 2-methoxy-4-vinylphenol + CO2. Catalyzes the reversible decarboxylation of aromatic carboxylic acids like ferulic acid, p-coumaric acid or cinnamic acid, producing the corresponding vinyl derivatives 4-vinylphenol, 4-vinylguaiacol, and styrene, respectively, which play the role of aroma metabolites. Not essential for ubiquinone synthesis. This is Ferulic acid decarboxylase 1 from Saccharomyces cerevisiae (strain ATCC 204508 / S288c) (Baker's yeast).